Consider the following 635-residue polypeptide: Phosphomethylpyrimidine synthase (635 aa).

The span at 1–14 (MNATVSSAVQSSLP) shows a compositional bias: polar residues. A disordered region spans residues 1–41 (MNATVSSAVQSSLPFSGKTAQVDEGTVKPLPRSQKTYLSGS). Residues asparagine 240, methionine 269, tyrosine 298, histidine 334, 354 to 356 (SRG), 395 to 398 (DGLR), and glutamate 434 contribute to the substrate site. Residue histidine 438 coordinates Zn(2+). Tyrosine 461 lines the substrate pocket. Histidine 502 is a binding site for Zn(2+). The [4Fe-4S] cluster site is built by cysteine 582, cysteine 585, and cysteine 590.

This sequence belongs to the ThiC family. In terms of assembly, homodimer. Requires [4Fe-4S] cluster as cofactor.

The enzyme catalyses 5-amino-1-(5-phospho-beta-D-ribosyl)imidazole + S-adenosyl-L-methionine = 4-amino-2-methyl-5-(phosphooxymethyl)pyrimidine + CO + 5'-deoxyadenosine + formate + L-methionine + 3 H(+). Its pathway is cofactor biosynthesis; thiamine diphosphate biosynthesis. Its function is as follows. Catalyzes the synthesis of the hydroxymethylpyrimidine phosphate (HMP-P) moiety of thiamine from aminoimidazole ribotide (AIR) in a radical S-adenosyl-L-methionine (SAM)-dependent reaction. The polypeptide is Phosphomethylpyrimidine synthase (Nitrosospira multiformis (strain ATCC 25196 / NCIMB 11849 / C 71)).